A 176-amino-acid chain; its full sequence is Beta-carotene hydroxylase (176 aa).

The region spanning 10–126 (LSVIAMEGIA…AHRLHHAVRG (117 aa)) is the Fatty acid hydroxylase domain. A disordered region spans residues 152–176 (HGRPPKRDAAKDRPDAASPSSSSPE). The segment covering 156–166 (PKRDAAKDRPD) has biased composition (basic and acidic residues). Residues 167–176 (AASPSSSSPE) are compositionally biased toward low complexity.

The protein belongs to the sterol desaturase family.

It participates in carotenoid biosynthesis; zeaxanthin biosynthesis. Its function is as follows. Catalyzes the hydroxylation reaction from beta-carotene to zeaxanthin. The polypeptide is Beta-carotene hydroxylase (crtZ) (Pseudescherichia vulneris (Escherichia vulneris)).